The primary structure comprises 895 residues: Iron-regulated surface determinant protein H (895 aa).

The signal sequence occupies residues M1–A40. Residues E42–P84 are disordered. Residues N53–Q62 show a composition bias toward low complexity. Positions P63–K81 are enriched in polar residues. An NEAT 1 domain is found at D105–S232. The interval V239 to P324 is disordered. Residues T240–N276 are compositionally biased toward low complexity. The segment covering M277–Y323 has biased composition (polar residues). 2 consecutive NEAT domains span residues T345 to D471 and Q543 to D660. Disordered regions lie at residues T657–V705, I752–K782, and K841–T868. 2 stretches are compositionally biased toward polar residues: residues S663–Q677 and A687–K697. Basic and acidic residues-rich tracts occupy residues I752–A764 and K841–K854. Polar residues predominate over residues L855–T868. Residues L861–G865 carry the LPXTG sorting signal motif. Position 864 is a pentaglycyl murein peptidoglycan amidated threonine (T864). A propeptide spans G865 to K895 (removed by sortase).

Belongs to the IsdH family.

The protein localises to the secreted. It localises to the cell wall. Its function is as follows. Binds human plasma haptoglobin-hemoglobin complexes, haptoglobin and hemoglobin. Binds haptoglobin-hemoglobin complexes with significantly higher affinity than haptoglobin alone. This chain is Iron-regulated surface determinant protein H (isdH), found in Staphylococcus aureus (strain MSSA476).